We begin with the raw amino-acid sequence, 283 residues long: 32 kDa beta-galactoside-binding lectin (283 aa).

Galectin domains follow at residues Y17–G148 and Y156–Q283. A beta-D-galactoside is bound at residue W217 to E223.

As to quaternary structure, (Microbial infection) Interacts (via domain galectin 2) with goat TMEM147. Interacts (via domain galectin 1) with goat TMEM63A.

It localises to the membrane. In terms of biological role, binds galactose. Exerts immunomodulatory effects on host peripheral blood mononuclear cells to down-regulate host immune response. Hemagglutinates human, dog, rabbit, chicken and mouse erythrocytes but does not hemagglutinate the erythrocytes of goat, its natural host. The protein is 32 kDa beta-galactoside-binding lectin (GAL-1) of Haemonchus contortus (Barber pole worm).